The chain runs to 177 residues: Large ribosomal subunit protein uL6 (177 aa).

The protein belongs to the universal ribosomal protein uL6 family. Part of the 50S ribosomal subunit.

Functionally, this protein binds to the 23S rRNA, and is important in its secondary structure. It is located near the subunit interface in the base of the L7/L12 stalk, and near the tRNA binding site of the peptidyltransferase center. This chain is Large ribosomal subunit protein uL6, found in Cereibacter sphaeroides (strain ATCC 17025 / ATH 2.4.3) (Rhodobacter sphaeroides).